The primary structure comprises 214 residues: tRNA (guanine-N(7)-)-methyltransferase (214 aa).

S-adenosyl-L-methionine contacts are provided by E45, D70, N97, and N119. Residue K123 coordinates substrate. The tract at residues 125–130 (RHNKRR) is interaction with RNA. Substrate-binding positions include D155 and 193-196 (TEYE).

Belongs to the class I-like SAM-binding methyltransferase superfamily. TrmB family.

It catalyses the reaction guanosine(46) in tRNA + S-adenosyl-L-methionine = N(7)-methylguanosine(46) in tRNA + S-adenosyl-L-homocysteine. The protein operates within tRNA modification; N(7)-methylguanine-tRNA biosynthesis. Its function is as follows. Catalyzes the formation of N(7)-methylguanine at position 46 (m7G46) in tRNA. The protein is tRNA (guanine-N(7)-)-methyltransferase of Clostridium novyi (strain NT).